Reading from the N-terminus, the 453-residue chain is Exodeoxyribonuclease 7 large subunit (453 aa).

It belongs to the XseA family. Heterooligomer composed of large and small subunits.

The protein localises to the cytoplasm. The catalysed reaction is Exonucleolytic cleavage in either 5'- to 3'- or 3'- to 5'-direction to yield nucleoside 5'-phosphates.. In terms of biological role, bidirectionally degrades single-stranded DNA into large acid-insoluble oligonucleotides, which are then degraded further into small acid-soluble oligonucleotides. The sequence is that of Exodeoxyribonuclease 7 large subunit from Rickettsia typhi (strain ATCC VR-144 / Wilmington).